Reading from the N-terminus, the 721-residue chain is Photosystem I P700 chlorophyll a apoprotein A1 (721 aa).

The next 8 membrane-spanning stretches (helical) occupy residues 61 to 84 (VFSA…FHGA), 147 to 170 (LYCT…FHYH), 186 to 210 (LNHH…HVSL), 282 to 300 (TAHH…GHMY), 337 to 360 (WHAQ…HHMY), 376 to 402 (LSLF…IFMV), 424 to 446 (AIVS…LYIH), and 522 to 540 (FLVH…LILL). Residues C564 and C573 each coordinate [4Fe-4S] cluster. A run of 2 helical transmembrane segments spans residues 580 to 601 (HVFL…HFSW) and 655 to 677 (LSAY…MFLF). Chlorophyll a' is bound at residue H666. Positions 674 and 682 each coordinate chlorophyll a. W683 provides a ligand contact to phylloquinone. A helical transmembrane segment spans residues 715–721 (AVGVAHY).

It belongs to the PsaA/PsaB family. As to quaternary structure, the PsaA/B heterodimer binds the P700 chlorophyll special pair and subsequent electron acceptors. PSI consists of a core antenna complex that captures photons, and an electron transfer chain that converts photonic excitation into a charge separation. The eukaryotic PSI reaction center is composed of at least 11 subunits. Requires P700 is a chlorophyll a/chlorophyll a' dimer, A0 is one or more chlorophyll a, A1 is one or both phylloquinones and FX is a shared 4Fe-4S iron-sulfur center. as cofactor.

The protein localises to the plastid. The protein resides in the chloroplast thylakoid membrane. It carries out the reaction reduced [plastocyanin] + hnu + oxidized [2Fe-2S]-[ferredoxin] = oxidized [plastocyanin] + reduced [2Fe-2S]-[ferredoxin]. Functionally, psaA and PsaB bind P700, the primary electron donor of photosystem I (PSI), as well as the electron acceptors A0, A1 and FX. PSI is a plastocyanin-ferredoxin oxidoreductase, converting photonic excitation into a charge separation, which transfers an electron from the donor P700 chlorophyll pair to the spectroscopically characterized acceptors A0, A1, FX, FA and FB in turn. Oxidized P700 is reduced on the lumenal side of the thylakoid membrane by plastocyanin. The sequence is that of Photosystem I P700 chlorophyll a apoprotein A1 from Ginkgo biloba (Ginkgo).